We begin with the raw amino-acid sequence, 652 residues long: Anaphase-promoting complex subunit 4 (652 aa).

In terms of assembly, the APC/C is composed of at least 13 subunits that stay tightly associated throughout the cell cycle: APC1, APC2, APC4, APC5, APC9, APC11, CDC16, CDC23, CDC26, CDC27, DOC1, MND2 and SWM1.

The protein resides in the cytoplasm. It is found in the nucleus. It functions in the pathway protein modification; protein ubiquitination. Its function is as follows. Component of the anaphase promoting complex/cyclosome (APC/C), a cell cycle-regulated E3 ubiquitin-protein ligase complex that controls progression through mitosis and the G1 phase of the cell cycle. The APC/C is thought to confer substrate specificity and, in the presence of ubiquitin-conjugating E2 enzymes, it catalyzes the formation of protein-ubiquitin conjugates that are subsequently degraded by the 26S proteasome. In early mitosis, the APC/C is activated by CDC20 and targets securin PDS1, the B-type cyclin CLB5, and other anaphase inhibitory proteins for proteolysis, thereby triggering the separation of sister chromatids at the metaphase-to-anaphase transition. In late mitosis and in G1, degradation of CLB5 allows activation of the APC/C by CDH1, which is needed to destroy CDC20 and the B-type cyclin CLB2 to allow exit from mitosis and creating the low CDK state necessary for cytokinesis and for reforming prereplicative complexes in G1 prior to another round of replication. The protein is Anaphase-promoting complex subunit 4 (APC4) of Saccharomyces cerevisiae (strain ATCC 204508 / S288c) (Baker's yeast).